The primary structure comprises 157 residues: MFDVLMYLFETYIHSDADVMVEQNELTDELSRAGFDKDEIEKALNWLERLANLHDSEREVYVAASAQGSMRIYAPQELARLSTECRGFLLFLEQAQVLNAETREICIERLLELDKPDIELDDLKWVVMMVLFNVPGSENAYQQMEELVFDESDGVIH.

This sequence belongs to the Smg family.

The polypeptide is Protein Smg homolog (Aeromonas hydrophila subsp. hydrophila (strain ATCC 7966 / DSM 30187 / BCRC 13018 / CCUG 14551 / JCM 1027 / KCTC 2358 / NCIMB 9240 / NCTC 8049)).